The primary structure comprises 312 residues: Methionyl-tRNA formyltransferase (312 aa).

A (6S)-5,6,7,8-tetrahydrofolate-binding site is contributed by Ser109 to Pro112.

It belongs to the Fmt family.

It catalyses the reaction L-methionyl-tRNA(fMet) + (6R)-10-formyltetrahydrofolate = N-formyl-L-methionyl-tRNA(fMet) + (6S)-5,6,7,8-tetrahydrofolate + H(+). Its function is as follows. Attaches a formyl group to the free amino group of methionyl-tRNA(fMet). The formyl group appears to play a dual role in the initiator identity of N-formylmethionyl-tRNA by promoting its recognition by IF2 and preventing the misappropriation of this tRNA by the elongation apparatus. In Geotalea daltonii (strain DSM 22248 / JCM 15807 / FRC-32) (Geobacter daltonii), this protein is Methionyl-tRNA formyltransferase.